We begin with the raw amino-acid sequence, 1163 residues long: Type IV pilus biogenesis factor PilY1 (1163 aa).

Residues 1–30 (MKSALHQIGKTSLAAALSGAVLLSAQTTHA) form the signal peptide. Positions 329–352 (SVGNADSTSRSLPDGKSYSSQTPY) are disordered. Ca(2+) contacts are provided by Asp600, Asp602, Asn604, and Asp608. The interval 619-621 (RGD) is integrin-binding motif RGD. Residues Asp851, Asn853, Asp855, Val857, and Asp859 each contribute to the Ca(2+) site. The segment at 1138–1163 (SGECLTVNPGPNTRGRQNWRPIEGKN) is disordered.

Belongs to the PilY1 family. Interacts (via C-terminal 532-1163) with host integrins alpha-V/beta-3 (ITGAV/ITGB3) and alpha-V/beta-5 (ITGAV/ITGB5).

It is found in the fimbrium. The protein localises to the membrane. The protein resides in the cytoplasm. Its subcellular location is the cytosol. Involved in pilus assembly, twitching motility and adhesion to host cells. Primes type IV pili (T4P) assembly and is required for inclusion of minor pilins PilV, PilW and PilX to the surface pili. Stabilizes assembled pilus fibers likely by antagonizing retraction mediated by PilT. Calcium-binding and calcium release by PilY1 seem to be essential for twitching motility and for regulation of pilus retraction dynamics of PilT. Adhesin for human tissue specifically recognizing a host receptor localized or enriched on basolateral epithelial cell surfaces. Binds host integrins in an calcium-dependent manner in vitro and this interaction may be employed by the bacterium to mediate host epithelial cell binding in vivo. The protein is Type IV pilus biogenesis factor PilY1 of Pseudomonas aeruginosa (strain PAK).